The sequence spans 551 residues: Trigger factor (551 aa).

A PPIase FKBP-type domain is found at 165-250; sequence GDLVVLDFAG…ATDVRVPGET (86 aa). The interval 442-551 is disordered; that stretch reads ADDDTIGKGH…APAKKKAAAE (110 aa). Residues 458–472 show a composition bias toward basic and acidic residues; sequence GHDHHDHDHDHDHAA. The segment covering 513–541 has biased composition (low complexity); it reads EAAPAPKKAPAKKAAAAKAEEAPAAAPKK. Residues 542–551 show a composition bias toward basic residues; it reads APAKKKAAAE.

This sequence belongs to the FKBP-type PPIase family. Tig subfamily.

The protein resides in the cytoplasm. The catalysed reaction is [protein]-peptidylproline (omega=180) = [protein]-peptidylproline (omega=0). Involved in protein export. Acts as a chaperone by maintaining the newly synthesized protein in an open conformation. Functions as a peptidyl-prolyl cis-trans isomerase. This Rhizorhabdus wittichii (strain DSM 6014 / CCUG 31198 / JCM 15750 / NBRC 105917 / EY 4224 / RW1) (Sphingomonas wittichii) protein is Trigger factor.